Reading from the N-terminus, the 316-residue chain is Ribose-phosphate pyrophosphokinase (316 aa).

ATP-binding positions include 37 to 39 (DGE) and 96 to 97 (RQ). The Mg(2+) site is built by His-131 and Asp-171. The active site involves Lys-195. D-ribose 5-phosphate is bound by residues Arg-197, Asp-221, and 225-229 (DTGGT).

It belongs to the ribose-phosphate pyrophosphokinase family. Class I subfamily. In terms of assembly, homohexamer. It depends on Mg(2+) as a cofactor.

Its subcellular location is the cytoplasm. It catalyses the reaction D-ribose 5-phosphate + ATP = 5-phospho-alpha-D-ribose 1-diphosphate + AMP + H(+). The protein operates within metabolic intermediate biosynthesis; 5-phospho-alpha-D-ribose 1-diphosphate biosynthesis; 5-phospho-alpha-D-ribose 1-diphosphate from D-ribose 5-phosphate (route I): step 1/1. Its function is as follows. Involved in the biosynthesis of the central metabolite phospho-alpha-D-ribosyl-1-pyrophosphate (PRPP) via the transfer of pyrophosphoryl group from ATP to 1-hydroxyl of ribose-5-phosphate (Rib-5-P). The chain is Ribose-phosphate pyrophosphokinase from Haemophilus ducreyi (strain 35000HP / ATCC 700724).